The chain runs to 376 residues: Phytanoyl-CoA hydroxylase-interacting protein-like (376 aa).

Phosphoserine is present on residues Ser-12 and Ser-15. Asn-23 is a glycosylation site (N-linked (GlcNAc...) asparagine). At Ser-25 the chain carries Phosphoserine. Asn-37 is a glycosylation site (N-linked (GlcNAc...) asparagine). In terms of domain architecture, Fibronectin type-III spans 52 to 161 (VPHNIKISNI…EIIEFCTADY (110 aa)).

This sequence belongs to the PHYHIP family.

Its function is as follows. May play a role in the development of the central system. This Homo sapiens (Human) protein is Phytanoyl-CoA hydroxylase-interacting protein-like (PHYHIPL).